A 253-amino-acid polypeptide reads, in one-letter code: Aspartate/glutamate leucyltransferase (253 aa).

The protein belongs to the R-transferase family. Bpt subfamily.

Its subcellular location is the cytoplasm. The enzyme catalyses N-terminal L-glutamyl-[protein] + L-leucyl-tRNA(Leu) = N-terminal L-leucyl-L-glutamyl-[protein] + tRNA(Leu) + H(+). The catalysed reaction is N-terminal L-aspartyl-[protein] + L-leucyl-tRNA(Leu) = N-terminal L-leucyl-L-aspartyl-[protein] + tRNA(Leu) + H(+). Functionally, functions in the N-end rule pathway of protein degradation where it conjugates Leu from its aminoacyl-tRNA to the N-termini of proteins containing an N-terminal aspartate or glutamate. In Allorhizobium ampelinum (strain ATCC BAA-846 / DSM 112012 / S4) (Agrobacterium vitis (strain S4)), this protein is Aspartate/glutamate leucyltransferase.